The primary structure comprises 807 residues: Ribosome-releasing factor 2, mitochondrial (807 aa).

The transit peptide at 1-18 directs the protein to the mitochondrion; sequence MFCRKYVFQTWKQLSRSY. One can recognise a tr-type G domain in the interval 27–315; it reads AKTRNIGIIA…GITKYLPSPL (289 aa). Residues 36-43, 100-104, and 154-157 contribute to the GTP site; these read AHIDAGKT, DTPGH, and NKMD.

Belongs to the TRAFAC class translation factor GTPase superfamily. Classic translation factor GTPase family. EF-G/EF-2 subfamily.

The protein resides in the mitochondrion. Functionally, mitochondrial GTPase that mediates the disassembly of ribosomes from messenger RNA at the termination of mitochondrial protein biosynthesis. Not involved in the GTP-dependent ribosomal translocation step during translation elongation. In Candida albicans (strain SC5314 / ATCC MYA-2876) (Yeast), this protein is Ribosome-releasing factor 2, mitochondrial.